Consider the following 249-residue polypeptide: Probable transcriptional regulatory protein Sfum_0996 (249 aa).

The protein belongs to the TACO1 family.

Its subcellular location is the cytoplasm. In Syntrophobacter fumaroxidans (strain DSM 10017 / MPOB), this protein is Probable transcriptional regulatory protein Sfum_0996.